Reading from the N-terminus, the 25-residue chain is Xenoposin precursor fragment BM2 (25 aa).

As to expression, expressed by the skin glands.

It is found in the secreted. Its function is as follows. Antimicrobial peptide. The polypeptide is Xenoposin precursor fragment BM2 (Xenopus boumbaensis (Mawa clawed frog)).